The primary structure comprises 321 residues: uncharacterized protein (321 aa).

This is an uncharacterized protein from Aquifex aeolicus (strain VF5).